Here is a 200-residue protein sequence, read N- to C-terminus: Peptidyl-tRNA hydrolase (200 aa).

Tyr14 is a tRNA binding site. Residue His19 is the Proton acceptor of the active site. Residues Phe64, Asn66, and Asn112 each coordinate tRNA.

The protein belongs to the PTH family. In terms of assembly, monomer.

The protein localises to the cytoplasm. The catalysed reaction is an N-acyl-L-alpha-aminoacyl-tRNA + H2O = an N-acyl-L-amino acid + a tRNA + H(+). Its function is as follows. Hydrolyzes ribosome-free peptidyl-tRNAs (with 1 or more amino acids incorporated), which drop off the ribosome during protein synthesis, or as a result of ribosome stalling. In terms of biological role, catalyzes the release of premature peptidyl moieties from peptidyl-tRNA molecules trapped in stalled 50S ribosomal subunits, and thus maintains levels of free tRNAs and 50S ribosomes. The chain is Peptidyl-tRNA hydrolase from Maricaulis maris (strain MCS10) (Caulobacter maris).